Here is a 558-residue protein sequence, read N- to C-terminus: 2-isopropylmalate synthase (558 aa).

The 275-residue stretch at Pro31 to Arg305 folds into the Pyruvate carboxyltransferase domain. Residues Asp40, His244, His246, and Asn280 each contribute to the Mg(2+) site. Residues Asn439–Ala558 form a regulatory domain region.

Belongs to the alpha-IPM synthase/homocitrate synthase family. LeuA type 2 subfamily. In terms of assembly, homodimer. It depends on Mg(2+) as a cofactor.

Its subcellular location is the cytoplasm. It carries out the reaction 3-methyl-2-oxobutanoate + acetyl-CoA + H2O = (2S)-2-isopropylmalate + CoA + H(+). Its pathway is amino-acid biosynthesis; L-leucine biosynthesis; L-leucine from 3-methyl-2-oxobutanoate: step 1/4. Functionally, catalyzes the condensation of the acetyl group of acetyl-CoA with 3-methyl-2-oxobutanoate (2-ketoisovalerate) to form 3-carboxy-3-hydroxy-4-methylpentanoate (2-isopropylmalate). This chain is 2-isopropylmalate synthase, found in Marinomonas sp. (strain MWYL1).